A 622-amino-acid polypeptide reads, in one-letter code: Chaperone protein HscA homolog (622 aa).

This sequence belongs to the heat shock protein 70 family.

Functionally, chaperone involved in the maturation of iron-sulfur cluster-containing proteins. Has a low intrinsic ATPase activity which is markedly stimulated by HscB. The protein is Chaperone protein HscA homolog of Pseudoalteromonas atlantica (strain T6c / ATCC BAA-1087).